Consider the following 280-residue polypeptide: Pyrethroid hydrolase (280 aa).

Catalysis depends on charge relay system residues Asp202 and His230. The interval 254 to 280 (YRQTATKAGPDRPAGADGGRADRADLP) is disordered.

The protein belongs to the AB hydrolase superfamily. In terms of assembly, monomer.

The enzyme catalyses (-)-trans-permethrin + H2O = (3-phenoxyphenyl)methanol + (1S,3R)-3-(2,2-dichlorovinyl)-2,2-dimethylcyclopropanecarboxylate + H(+). Functionally, catalyzes the hydrolysis of pyrethroids pesticides. Catalyzes the hydrolysis of cypermethrin to equimolar amounts of cyano-3-phenoxybenzyl alcohol and 2,2-dimethyl-3-(2,2-dichlorovinyl)-cyclopropanecarboxylic acid. Hydrolyzes cis-permethrin at approximately equal rate to trans-permethrin. This chain is Pyrethroid hydrolase (pytH), found in Sphingobium wenxiniae (strain DSM 21828 / CGMCC 1.7748 / JZ-1).